Here is a 3148-residue protein sequence, read N- to C-terminus: Huntingtin (3148 aa).

HEAT repeat units follow at residues 149 to 186 (PYLV…ALGH) and 191 to 228 (GEIK…HSRR). Composition is skewed to polar residues over residues 428 to 451 (QQPR…SSEQ), 475 to 486 (SRSSSCGANITP), and 516 to 526 (PSDSSQTTTEG). Disordered regions lie at residues 428–532 (QQPR…SAVT) and 557–622 (QDEE…NKMS). Over residues 602-621 (SVDRFIPKDEPPEPEPDNKM) the composition is skewed to basic and acidic residues. HEAT repeat units follow at residues 760–797 (LSLV…SLCG) and 861–898 (LQER…RLFF). 2 stretches are compositionally biased toward low complexity: residues 1025–1042 (TLSV…TTSS) and 1105–1115 (SSSSTNTSGGT). Disordered regions lie at residues 1025–1047 (TLSV…VDPE), 1098–1117 (WAGE…GTHK), and 1158–1215 (GPPV…GSTA). Over residues 1201–1215 (EANTGRPTESTGSTA) the composition is skewed to polar residues. The stretch at 1419–1456 (LFEPLVIKALKQYTTSTSVALQRQVLDLLAQLVQLRVN) is one HEAT 5 repeat. Polar residues predominate over residues 1712–1730 (PNLSPSDQPAGDGQQNQEP). 2 disordered regions span residues 1712-1735 (PNLS…GEAQ) and 2072-2091 (VSDT…DGDP). Residues 2072–2084 (VSDTSSPSTPVTS) show a composition bias toward low complexity. Residues 2398 to 2407 (IIISLSRLPL) carry the Nuclear export signal motif. Acidic residues predominate over residues 2639–2649 (EWGEDEDDEAD). The disordered stretch occupies residues 2639 to 2664 (EWGEDEDDEADPPAPTSPPLSPINSR). Residues 2650-2659 (PPAPTSPPLS) show a composition bias toward pro residues.

Belongs to the huntingtin family.

Its subcellular location is the cytoplasm. The protein localises to the nucleus. May play a role in microtubule-mediated transport or vesicle function. This chain is Huntingtin (htt), found in Takifugu rubripes (Japanese pufferfish).